The primary structure comprises 261 residues: Small ribosomal subunit protein mS23 (261 aa).

The tract at residues 234-261 (NPSESWATDEKDPKKNDDIEEDVEEIKL) is disordered. The span at 241–250 (TDEKDPKKND) shows a compositional bias: basic and acidic residues. Over residues 251–261 (DIEEDVEEIKL) the composition is skewed to acidic residues.

It belongs to the mitochondrion-specific ribosomal protein mS23 family. In terms of assembly, component of the mitochondrial small ribosomal subunit.

The protein resides in the mitochondrion. The chain is Small ribosomal subunit protein mS23 (RSM25) from Vanderwaltozyma polyspora (strain ATCC 22028 / DSM 70294 / BCRC 21397 / CBS 2163 / NBRC 10782 / NRRL Y-8283 / UCD 57-17) (Kluyveromyces polysporus).